Here is a 507-residue protein sequence, read N- to C-terminus: ATP synthase subunit alpha, chloroplastic (507 aa).

Residue 170–177 coordinates ATP; the sequence is GDRQTGKT. At Thr257 the chain carries Phosphothreonine.

The protein belongs to the ATPase alpha/beta chains family. In terms of assembly, F-type ATPases have 2 components, CF(1) - the catalytic core - and CF(0) - the membrane proton channel. CF(1) has five subunits: alpha(3), beta(3), gamma(1), delta(1), epsilon(1). CF(0) has four main subunits: a, b, b' and c.

The protein localises to the plastid. Its subcellular location is the chloroplast thylakoid membrane. It catalyses the reaction ATP + H2O + 4 H(+)(in) = ADP + phosphate + 5 H(+)(out). Its function is as follows. Produces ATP from ADP in the presence of a proton gradient across the membrane. The alpha chain is a regulatory subunit. The polypeptide is ATP synthase subunit alpha, chloroplastic (Aethionema cordifolium (Lebanon stonecress)).